A 79-amino-acid chain; its full sequence is Protein SIP18 (79 aa).

The interval 1–79 is disordered; that stretch reads MSNMMNKFAE…DWKTYENMKK (79 aa). Basic and acidic residues predominate over residues 8 to 20; sequence FAEKLQGNDDSHQ.

The chain is Protein SIP18 (SIP18) from Saccharomyces cerevisiae (strain ATCC 204508 / S288c) (Baker's yeast).